Reading from the N-terminus, the 380-residue chain is Cytochrome b (380 aa).

The next 4 membrane-spanning stretches (helical) occupy residues 34–54, 78–99, 114–134, and 179–199; these read FGSLLAVCFMTQIITGLLLAM, WLIRNLHANGASFFFICIYLHI, WNTGVILLLTLMATAFVGYVL, and FFALHFLLPFVIAGITIIHLT. The heme b site is built by H84 and H98. Positions 183 and 197 each coordinate heme b. Residue H202 participates in a ubiquinone binding. The next 4 membrane-spanning stretches (helical) occupy residues 227 to 247, 289 to 309, 321 to 341, and 348 to 368; these read IKDILGLTLMLTPLLTLALFS, LGGVLALAASVLILLLIPFLH, FSQLLFWLLVANLLILTWVGS, and FIIIGQLASLSYFTTLLILFP.

The protein belongs to the cytochrome b family. As to quaternary structure, the cytochrome bc1 complex contains 11 subunits: 3 respiratory subunits (MT-CYB, CYC1 and UQCRFS1), 2 core proteins (UQCRC1 and UQCRC2) and 6 low-molecular weight proteins (UQCRH/QCR6, UQCRB/QCR7, UQCRQ/QCR8, UQCR10/QCR9, UQCR11/QCR10 and a cleavage product of UQCRFS1). This cytochrome bc1 complex then forms a dimer. Heme b is required as a cofactor.

It is found in the mitochondrion inner membrane. Its function is as follows. Component of the ubiquinol-cytochrome c reductase complex (complex III or cytochrome b-c1 complex) that is part of the mitochondrial respiratory chain. The b-c1 complex mediates electron transfer from ubiquinol to cytochrome c. Contributes to the generation of a proton gradient across the mitochondrial membrane that is then used for ATP synthesis. The polypeptide is Cytochrome b (MT-CYB) (Numida meleagris (Helmeted guineafowl)).